The chain runs to 564 residues: Urocanate hydratase (564 aa).

NAD(+) is bound by residues 58–59 (GG), Gln-136, 182–184 (GMG), Glu-202, Arg-207, 245–246 (NA), 266–270 (QTSAH), 276–277 (YL), and Tyr-325. Cys-413 is a catalytic residue. Gly-495 contacts NAD(+).

The protein belongs to the urocanase family. It depends on NAD(+) as a cofactor.

Its subcellular location is the cytoplasm. It carries out the reaction 4-imidazolone-5-propanoate = trans-urocanate + H2O. Its pathway is amino-acid degradation; L-histidine degradation into L-glutamate; N-formimidoyl-L-glutamate from L-histidine: step 2/3. Functionally, catalyzes the conversion of urocanate to 4-imidazolone-5-propionate. The protein is Urocanate hydratase of Vibrio atlanticus (strain LGP32) (Vibrio splendidus (strain Mel32)).